The sequence spans 117 residues: NADH-ubiquinone oxidoreductase chain 3 (117 aa).

The next 3 helical transmembrane spans lie at 1-21 (MKFI…LLLL), 58-78 (FLMT…LPII), and 86-106 (TMIS…TLIL).

The protein belongs to the complex I subunit 3 family.

It localises to the mitochondrion membrane. The catalysed reaction is a ubiquinone + NADH + 5 H(+)(in) = a ubiquinol + NAD(+) + 4 H(+)(out). Its function is as follows. Core subunit of the mitochondrial membrane respiratory chain NADH dehydrogenase (Complex I) that is believed to belong to the minimal assembly required for catalysis. Complex I functions in the transfer of electrons from NADH to the respiratory chain. The immediate electron acceptor for the enzyme is believed to be ubiquinone. This chain is NADH-ubiquinone oxidoreductase chain 3 (ND3), found in Apis mellifera ligustica (Common honeybee).